The sequence spans 72 residues: Translation initiation factor IF-1 (72 aa).

Residues 1 to 72 (MAKDDVIEID…DKGRITFRYK (72 aa)) form the S1-like domain.

Belongs to the IF-1 family. Component of the 30S ribosomal translation pre-initiation complex which assembles on the 30S ribosome in the order IF-2 and IF-3, IF-1 and N-formylmethionyl-tRNA(fMet); mRNA recruitment can occur at any time during PIC assembly.

The protein resides in the cytoplasm. In terms of biological role, one of the essential components for the initiation of protein synthesis. Stabilizes the binding of IF-2 and IF-3 on the 30S subunit to which N-formylmethionyl-tRNA(fMet) subsequently binds. Helps modulate mRNA selection, yielding the 30S pre-initiation complex (PIC). Upon addition of the 50S ribosomal subunit IF-1, IF-2 and IF-3 are released leaving the mature 70S translation initiation complex. In Sulfurovum sp. (strain NBC37-1), this protein is Translation initiation factor IF-1.